The sequence spans 181 residues: Lysozyme A (181 aa).

Residues 1–19 (MRIAFFLLVLAVIIGFAYG) form the signal peptide. Positions 139 to 181 (LTDSRPLGPFNVTESEMAQLFIDHEIAMAQCEAEKTCNGFDLE) are excised as a propeptide.

It belongs to the dictyostelium lysozyme family. Post-translationally, contains six disulfide bonds.

It localises to the cytoplasmic vesicle lumen. The enzyme catalyses Hydrolysis of 1,4-beta-linkages between N-acetylmuramic acid and N-acetyl-D-glucosamine residues in a peptidoglycan.. Its function is as follows. Has antibacterial activity against the Gram-positive bacteria B.subtilis, B.megaterium and M.luteus. No antibacterial activity detected against the Gram-positive bacterium S.aureus or against the Gram-negative bacterium E.coli. Lacks chitinase activity. The polypeptide is Lysozyme A (Dictyostelium discoideum (Social amoeba)).